Here is a 221-residue protein sequence, read N- to C-terminus: Uracil-DNA glycosylase 1 (221 aa).

Asp-61 serves as the catalytic Proton acceptor.

It belongs to the uracil-DNA glycosylase (UDG) superfamily. UNG family.

The protein resides in the cytoplasm. The catalysed reaction is Hydrolyzes single-stranded DNA or mismatched double-stranded DNA and polynucleotides, releasing free uracil.. Excises uracil residues from the DNA which can arise as a result of misincorporation of dUMP residues by DNA polymerase or due to deamination of cytosine. The sequence is that of Uracil-DNA glycosylase 1 from Listeria monocytogenes serotype 4b (strain F2365).